Here is a 1657-residue protein sequence, read N- to C-terminus: Thrombospondin type-1 domain-containing protein 7A (1657 aa).

The N-terminal stretch at 1–47 is a signal peptide; it reads MGLQARRWASGSRGAAGPRRGVLQLLPLPLPLPLLLLLLLRPGAGRA. Residues 48-1607 lie on the Extracellular side of the membrane; it reads AAQGEAEAPT…FGPDGRLKTW (1560 aa). TSP type-1 domains follow at residues 57-116, 120-192, and 194-247; these read TLYL…KVCD, ELYD…IPCQ, and DCIV…SPCE. Asparagine 234 carries an N-linked (GlcNAc...) asparagine glycan. A disordered region spans residues 265 to 311; the sequence is MPHSRQVRQARRRGKNKEREKDRSKGVKDPEARELIKKKRNRNRQNR. Residues 267 to 315 are a coiled coil; it reads HSRQVRQARRRGKNKEREKDRSKGVKDPEARELIKKKRNRNRQNRQENK. The span at 269-280 shows a compositional bias: basic residues; it reads RQVRQARRRGKN. Residues 281 to 299 show a composition bias toward basic and acidic residues; the sequence is KEREKDRSKGVKDPEAREL. The segment covering 300–309 has biased composition (basic residues); the sequence is IKKKRNRNRQ. The N-linked (GlcNAc...) asparagine glycan is linked to asparagine 332. TSP type-1 domains are found at residues 360 to 416, 423 to 510, 512 to 574, 634 to 695, 696 to 769, 771 to 831, 832 to 904, 906 to 959, 960 to 1033, 1035 to 1095, 1096 to 1163, 1166 to 1220, 1221 to 1284, 1286 to 1341, 1342 to 1412, and 1414 to 1475; these read ECQV…LSQG, ATYG…IPCP, ECEV…PACY, DCVL…HPCT, VYHW…LPCK, DCIV…QACQ, SYRW…IPCQ, DCQL…CPCD, KYNA…IPCP, DCKL…SDCN, QYLW…LPCP, CVIS…KNCY, HYDY…VECP, NCQL…KPCY, RWQY…QPCP, and DCYL…GQCY. Disulfide bonds link cysteine 435–cysteine 505, cysteine 455–cysteine 509, and cysteine 466–cysteine 494. N-linked (GlcNAc...) asparagine glycosylation is present at asparagine 450. A glycan (N-linked (GlcNAc...) asparagine) is linked at asparagine 500. 2 cysteine pairs are disulfide-bonded: cysteine 635–cysteine 677 and cysteine 646–cysteine 650. Residue asparagine 679 is glycosylated (N-linked (GlcNAc...) asparagine). Cystine bridges form between cysteine 689–cysteine 694, cysteine 707–cysteine 764, cysteine 728–cysteine 768, cysteine 739–cysteine 752, cysteine 772–cysteine 814, cysteine 783–cysteine 787, and cysteine 824–cysteine 830. A glycan (N-linked (GlcNAc...) asparagine) is linked at asparagine 717. Residue asparagine 968 is glycosylated (N-linked (GlcNAc...) asparagine). Cystine bridges form between cysteine 972–cysteine 1028, cysteine 994–cysteine 1032, cysteine 1005–cysteine 1018, cysteine 1036–cysteine 1073, cysteine 1047–cysteine 1051, and cysteine 1090–cysteine 1094. N-linked (GlcNAc...) asparagine glycosylation is present at asparagine 1043. An N-linked (GlcNAc...) asparagine glycan is attached at asparagine 1182. The cysteines at positions 1213 and 1219 are disulfide-linked. An N-linked (GlcNAc...) asparagine glycan is attached at asparagine 1225. 12 disulfide bridges follow: cysteine 1232-cysteine 1279, cysteine 1240-cysteine 1283, cysteine 1251-cysteine 1264, cysteine 1287-cysteine 1325, cysteine 1298-cysteine 1302, cysteine 1335-cysteine 1340, cysteine 1351-cysteine 1407, cysteine 1358-cysteine 1411, cysteine 1369-cysteine 1388, cysteine 1415-cysteine 1459, cysteine 1426-cysteine 1430, and cysteine 1469-cysteine 1474. The N-linked (GlcNAc...) asparagine glycan is linked to asparagine 1276. Asparagine 1366 carries an N-linked (GlcNAc...) asparagine glycan. N-linked (GlcNAc...) asparagine glycans are attached at residues asparagine 1500 and asparagine 1547. Residues 1570–1591 are disordered; that stretch reads DVKTSRAVHPTQPSSNPAGRGR. Residues 1608–1628 traverse the membrane as a helical segment; that stretch reads VYGVAAGAFVLLIFIVSMIYL. Topologically, residues 1629-1657 are cytoplasmic; it reads ACKKPKKPQRRQNNRLKPLTLAYDGDADM.

Proteolytic cleavage in the extracellular region generates a 210 kDa soluble form. In terms of processing, extensively N-glycosylated. In terms of tissue distribution, detected on kidney podocytes along the glomerular capillary wall (at protein level).

It localises to the cell membrane. Its subcellular location is the cell projection. The protein localises to the secreted. Plays a role in actin cytoskeleton rearrangement. Its function is as follows. The soluble form promotes endothelial cell migration and filopodia formation during sprouting angiogenesis via a FAK-dependent mechanism. The protein is Thrombospondin type-1 domain-containing protein 7A (THSD7A) of Homo sapiens (Human).